Consider the following 552-residue polypeptide: Leiomodin-2 (552 aa).

The interval 1–47 (MSTFGYRRELSKYEDIDEDELLASLTEEELKELERELEDIEPDRNLP) is interaction with tropomyosin alpha. Interaction with actin regions lie at residues 1 to 169 (MSTF…SSHV) and 170 to 498 (RHKK…KEIK). Residues 13-46 (YEDIDEDELLASLTEEELKELERELEDIEPDRNL) adopt a coiled-coil conformation. Disordered stretches follow at residues 33–67 (LERE…FSRE), 87–191 (GACE…DGKD), and 364–531 (MDKQ…DNLM). The span at 51-64 (RQKSLTEKTPTGTF) shows a compositional bias: polar residues. Positions 86-151 (LGACEKDSEQ…DDEDEEKQNS (66 aa)) form a coiled coil. Composition is skewed to acidic residues over residues 93–108 (SEQE…EECF) and 115–147 (VSEE…EDEE). The span at 364 to 377 (MDKQRQKRMQEQRQ) shows a compositional bias: basic and acidic residues. The span at 398–415 (PRSSPYTSPKSSPWSSPK) shows a compositional bias: low complexity. Residues 425 to 450 (SQPPAPAPPPPPPPPPPPPPPPPPVI) show a composition bias toward pro residues. The segment covering 478 to 488 (QKKKKGKKGKK) has biased composition (basic residues). Over residues 489–513 (HENSILKEIKDSLKSVSDRKSEEGS) the composition is skewed to basic and acidic residues. The segment covering 514–524 (RPSTRPSTPQR) has biased composition (polar residues). The tract at residues 526–545 (LHDNLMEAIRASSIKQLRRV) is interaction with actin 3. The 20-residue stretch at 526 to 545 (LHDNLMEAIRASSIKQLRRV) folds into the WH2 domain.

Belongs to the tropomodulin family. Can bind at least three actin monomers and thereby provides a nucleus for actin filament formation. Interacts (via N-terminus) with tropomyosin alpha (TPM1) (via N-terminus). May also interact with TPM2 (via N-terminus).

It localises to the cytoplasm. The protein localises to the myofibril. The protein resides in the sarcomere. Its subcellular location is the m line. It is found in the cytoskeleton. In terms of biological role, mediates nucleation of actin filaments and thereby promotes actin polymerization. Plays a role in the regulation of actin filament length. Required for normal sarcomere organization in the heart, and for normal heart function. The chain is Leiomodin-2 (LMOD2) from Gallus gallus (Chicken).